We begin with the raw amino-acid sequence, 243 residues long: tRNA (guanine-N(1)-)-methyltransferase (243 aa).

S-adenosyl-L-methionine contacts are provided by residues Gly111 and 131–136; that span reads IGDYVL.

The protein belongs to the RNA methyltransferase TrmD family. As to quaternary structure, homodimer.

Its subcellular location is the cytoplasm. The catalysed reaction is guanosine(37) in tRNA + S-adenosyl-L-methionine = N(1)-methylguanosine(37) in tRNA + S-adenosyl-L-homocysteine + H(+). In terms of biological role, specifically methylates guanosine-37 in various tRNAs. The sequence is that of tRNA (guanine-N(1)-)-methyltransferase from Brevibacillus brevis (strain 47 / JCM 6285 / NBRC 100599).